The sequence spans 140 residues: uncharacterized protein (140 aa).

Residue Asn-86 is glycosylated (N-linked (GlcNAc...) asparagine; by host). Residues 92 to 112 (IFNGLGFILIVIFIYLLLITL) traverse the membrane as a helical segment.

This sequence belongs to the asfivirus B117L family.

Its subcellular location is the host membrane. The protein resides in the virion. This is an uncharacterized protein from African swine fever virus (isolate Pig/Kenya/KEN-50/1950) (ASFV).